The sequence spans 364 residues: Mannose-1-phosphate guanyltransferase (364 aa).

It belongs to the transferase hexapeptide repeat family.

Its subcellular location is the cytoplasm. The catalysed reaction is alpha-D-mannose 1-phosphate + GTP + H(+) = GDP-alpha-D-mannose + diphosphate. The protein operates within nucleotide-sugar biosynthesis; GDP-alpha-D-mannose biosynthesis; GDP-alpha-D-mannose from alpha-D-mannose 1-phosphate (GTP route): step 1/1. Its function is as follows. Involved in cell wall synthesis where it is required for glycosylation. Involved in cell cycle progression through cell-size checkpoint. This chain is Mannose-1-phosphate guanyltransferase (MPG1), found in Pichia angusta (Yeast).